The primary structure comprises 503 residues: Probable dolichyl pyrophosphate Man9GlcNAc2 alpha-1,3-glucosyltransferase (503 aa).

Residues 1-46 (MKERIKDKAWRPQFIKLNNPDTSKKIVSQKSKKPEIVDLSSPGNND) lie on the Cytoplasmic side of the membrane. The helical transmembrane segment at 47 to 67 (LVTISILCVLLCFQLAISLNP) threads the bilayer. Over 68–151 (HSGESQPPMY…SRGYESIAHK (84 aa)) the chain is Lumenal. A helical membrane pass occupies residues 152-172 (LFMRLSAIIPFYIFYLPPLIF). Residues 173–181 (YFTRSKKMS) lie on the Cytoplasmic side of the membrane. A helical transmembrane segment spans residues 182–202 (PILYALALLYPSLLVIDNGHF). Topologically, residues 203-211 (QYNSISLGL) are lumenal. A helical membrane pass occupies residues 212–232 (FLATYMFLTKNFTIIGSILFV). The Cytoplasmic portion of the chain corresponds to 233–239 (AALNYKQ). A helical membrane pass occupies residues 240 to 257 (MELYHALPVFVFILARSI). Over 258–268 (NKTQLFNSFRR) the chain is Lumenal. The chain crosses the membrane as a helical span at residues 269–289 (ILTIGLFVVGTFLIIWLPFLL). The Cytoplasmic segment spans residues 290–332 (TGTAKDVIIRVFPFNRGLYEDKVASFWCAFSFILKRLPLQSVQ). A helical membrane pass occupies residues 333-353 (IYISTALVLAGSAPSLLVLFL). Residues 354-359 (RPTEKQ) are Lumenal-facing. The chain crosses the membrane as a helical span at residues 360-379 (FRISLTATGLSFFLFSFHVH). At 380 to 382 (EKT) the chain is on the cytoplasmic side. Residues 383–403 (ILLAAVPALLLISEYTSLVIW) traverse the membrane as a helical segment. Residues 404–420 (FLNITNISIFSLCVKDN) are Lumenal-facing. The chain crosses the membrane as a helical span at residues 421–441 (FALSLSFFFAYFVVSYAYTAP). At 442 to 443 (RK) the chain is on the cytoplasmic side. A helical transmembrane segment spans residues 444–464 (ISHILTILIGFAICILELYGP). Topologically, residues 465–474 (SNQRFPHIYQ) are lumenal. Residues 475–495 (LANAFFSCVHFIYFLLYLSFA) traverse the membrane as a helical segment. Over 496 to 503 (SFEKTKKE) the chain is Cytoplasmic.

This sequence belongs to the ALG6/ALG8 glucosyltransferase family.

The protein resides in the endoplasmic reticulum membrane. It catalyses the reaction an alpha-D-Man-(1-&gt;2)-alpha-D-Man-(1-&gt;2)-alpha-D-Man-(1-&gt;3)-[alpha-D-Man-(1-&gt;2)-alpha-D-Man-(1-&gt;3)-[alpha-D-Man-(1-&gt;2)-alpha-D-Man-(1-&gt;6)]-alpha-D-Man-(1-&gt;6)]-beta-D-Man-(1-&gt;4)-beta-D-GlcNAc-(1-&gt;4)-alpha-D-GlcNAc-diphospho-di-trans,poly-cis-dolichol + a di-trans,poly-cis-dolichyl beta-D-glucosyl phosphate = an alpha-D-Glc-(1-&gt;3)-alpha-D-Man-(1-&gt;2)-alpha-D-Man-(1-&gt;2)-alpha-D-Man-(1-&gt;3)-[alpha-D-Man-(1-&gt;2)-alpha-D-Man-(1-&gt;3)-[alpha-D-Man-(1-&gt;2)-alpha-D-Man-(1-&gt;6)]-alpha-D-Man-(1-&gt;6)]-beta-D-Man-(1-&gt;4)-beta-D-GlcNAc-(1-&gt;4)-alpha-D-GlcNAc-diphospho-di-trans,poly-cis-dolichol + a di-trans,poly-cis-dolichyl phosphate + H(+). The protein operates within protein modification; protein glycosylation. Functionally, adds the first glucose residue to the lipid-linked oligosaccharide precursor for N-linked glycosylation. Transfers glucose from dolichyl phosphate glucose (Dol-P-Glc) onto the lipid-linked oligosaccharide Man(9)GlcNAc(2)-PP-Dol. This chain is Probable dolichyl pyrophosphate Man9GlcNAc2 alpha-1,3-glucosyltransferase, found in Caenorhabditis elegans.